The chain runs to 38 residues: Photosystem II reaction center protein L (38 aa).

Residues 17–37 (SLYWGLLLIFVLAVLFSNYFF) traverse the membrane as a helical segment.

This sequence belongs to the PsbL family. PSII is composed of 1 copy each of membrane proteins PsbA, PsbB, PsbC, PsbD, PsbE, PsbF, PsbH, PsbI, PsbJ, PsbK, PsbL, PsbM, PsbT, PsbX, PsbY, PsbZ, Psb30/Ycf12, at least 3 peripheral proteins of the oxygen-evolving complex and a large number of cofactors. It forms dimeric complexes.

The protein localises to the plastid. Its subcellular location is the chloroplast thylakoid membrane. Its function is as follows. One of the components of the core complex of photosystem II (PSII). PSII is a light-driven water:plastoquinone oxidoreductase that uses light energy to abstract electrons from H(2)O, generating O(2) and a proton gradient subsequently used for ATP formation. It consists of a core antenna complex that captures photons, and an electron transfer chain that converts photonic excitation into a charge separation. This subunit is found at the monomer-monomer interface and is required for correct PSII assembly and/or dimerization. In Antirrhinum majus (Garden snapdragon), this protein is Photosystem II reaction center protein L.